We begin with the raw amino-acid sequence, 249 residues long: Type III pantothenate kinase (249 aa).

Residue 6–13 (DCGNSFIK) participates in ATP binding. Residues Tyr-93 and 100–103 (GLDR) each bind substrate. Asp-102 (proton acceptor) is an active-site residue. Asp-122 is a binding site for K(+). ATP is bound at residue Thr-125. Thr-181 provides a ligand contact to substrate.

It belongs to the type III pantothenate kinase family. As to quaternary structure, homodimer. Requires NH4(+) as cofactor. K(+) is required as a cofactor.

The protein resides in the cytoplasm. The enzyme catalyses (R)-pantothenate + ATP = (R)-4'-phosphopantothenate + ADP + H(+). Its pathway is cofactor biosynthesis; coenzyme A biosynthesis; CoA from (R)-pantothenate: step 1/5. Its function is as follows. Catalyzes the phosphorylation of pantothenate (Pan), the first step in CoA biosynthesis. This is Type III pantothenate kinase from Pseudomonas savastanoi pv. phaseolicola (strain 1448A / Race 6) (Pseudomonas syringae pv. phaseolicola (strain 1448A / Race 6)).